The following is a 368-amino-acid chain: Phospho-N-acetylmuramoyl-pentapeptide-transferase (368 aa).

The next 9 membrane-spanning stretches (helical) occupy residues 23-43, 72-92, 94-114, 139-159, 170-190, 201-221, 238-258, 265-286, and 345-365; these read YITF…LVFG, IPTM…LLWA, IAEP…AVGF, VALG…SVLL, ITVD…TAVS, GLAA…AYLT, AGEV…FLWF, VFMG…ALLI, and KIVI…LLTL.

This sequence belongs to the glycosyltransferase 4 family. MraY subfamily. It depends on Mg(2+) as a cofactor.

The protein resides in the cell inner membrane. The enzyme catalyses UDP-N-acetyl-alpha-D-muramoyl-L-alanyl-gamma-D-glutamyl-meso-2,6-diaminopimeloyl-D-alanyl-D-alanine + di-trans,octa-cis-undecaprenyl phosphate = di-trans,octa-cis-undecaprenyl diphospho-N-acetyl-alpha-D-muramoyl-L-alanyl-D-glutamyl-meso-2,6-diaminopimeloyl-D-alanyl-D-alanine + UMP. Its pathway is cell wall biogenesis; peptidoglycan biosynthesis. Catalyzes the initial step of the lipid cycle reactions in the biosynthesis of the cell wall peptidoglycan: transfers peptidoglycan precursor phospho-MurNAc-pentapeptide from UDP-MurNAc-pentapeptide onto the lipid carrier undecaprenyl phosphate, yielding undecaprenyl-pyrophosphoryl-MurNAc-pentapeptide, known as lipid I. This chain is Phospho-N-acetylmuramoyl-pentapeptide-transferase, found in Chloroherpeton thalassium (strain ATCC 35110 / GB-78).